The sequence spans 669 residues: GTP-binding protein 1 (669 aa).

The interval 1–32 is disordered; sequence MAAERSRSPMESPVPASMFAPEPSSPGAARAA. Phosphoserine is present on residues Ser-6, Ser-8, Ser-12, Ser-24, Ser-25, Ser-44, Ser-47, and Ser-69. The tr-type G domain occupies 158 to 389; that stretch reads FLEVRVAVVG…LNLLSPRTSY (232 aa). The tract at residues 167–174 is G1; that stretch reads GNVDAGKS. 167–174 contributes to the GTP binding site; sequence GNVDAGKS. The G2 stretch occupies residues 206–210; it reads GRTSS. A G3 region spans residues 252-255; that stretch reads DLAG. GTP-binding positions include 252–256 and 308–311; these read DLAGH and TKID. A G4 region spans residues 308 to 311; the sequence is TKID. The segment at 366–368 is G5; sequence SNV. Polar residues predominate over residues 573-595; sequence LLQTTNNSPMNSKPQQIKMQSTK. The interval 573 to 669 is disordered; it reads LLQTTNNSPM…GACMTPASGC (97 aa). The residue at position 580 (Ser-580) is a Phosphoserine. Residues 633-645 are compositionally biased toward low complexity; it reads SSSLQPQPKPSSG. The span at 646–657 shows a compositional bias: basic residues; the sequence is GRRRGGQRHKVK.

It belongs to the TRAFAC class translation factor GTPase superfamily. Classic translation factor GTPase family. GTPBP1 subfamily. In terms of assembly, interacts with EXOSC2/RRP4, EXOSC3/RRP40, EXOSC5/RRP46, HNRNPD, HNRNPR and SYNCRIP. Identified in a complex with AANAT mRNA, but does not bind mRNA by itself.

It is found in the cytoplasm. Functionally, promotes degradation of target mRNA species. Plays a role in the regulation of circadian mRNA stability. Binds GTP and has GTPase activity. The chain is GTP-binding protein 1 (GTPBP1) from Bos taurus (Bovine).